Here is a 430-residue protein sequence, read N- to C-terminus: Glycine reductase complex component B subunits alpha and beta (430 aa).

The Schiff-base intermediate with substrate; via pyruvic acid role is filled by cysteine 242. A Pyruvic acid (Cys) modification is found at cysteine 242.

In terms of assembly, heterohexamer of two alpha, two beta and two gamma subunits. Component of the glycine reductase complex, together with components A and C. PB is substrate specific. Post-translationally, the peptide chain is cleaved into beta and alpha chains, and the alpha chain N-terminal cysteine is deaminated and oxidized to form a reactive pyruvoyl group.

The enzyme catalyses acetyl phosphate + [thioredoxin]-disulfide + NH4(+) + H2O = [thioredoxin]-dithiol + glycine + phosphate + H(+). Functionally, in the first step of glycine reductase, the substrate is bound to component PB via a Schiff base intermediate. Then the PB-activated substrate is nucleophilically attacked by the selenol anion of component PA to transform it to a carboxymethylated selenoether and the respective amine. By action of component PC, acetyl phosphate is formed, leaving component PA in its oxidized state. Finally component PA becomes reduced by the thioredoxin system to start a new catalytic cycle of reductive deamination. The polypeptide is Glycine reductase complex component B subunits alpha and beta (grdE) (Acetoanaerobium sticklandii (strain ATCC 12662 / DSM 519 / JCM 1433 / CCUG 9281 / NCIMB 10654 / HF) (Clostridium sticklandii)).